Here is a 141-residue protein sequence, read N- to C-terminus: MAKKVVAIIKLALEAGKATPAPPVGPALGQRGVNIVMFCKDYNARTADKAGLIIPVEITVYEDKSYTFVLKTPPASVLLAKAAGVQKGSGNPKKTQVGSVTKKQVEEIAQTKLPDLNTRRLESAIRIIEGTAKNMGIGVTD.

It belongs to the universal ribosomal protein uL11 family. As to quaternary structure, part of the ribosomal stalk of the 50S ribosomal subunit. Interacts with L10 and the large rRNA to form the base of the stalk. L10 forms an elongated spine to which L12 dimers bind in a sequential fashion forming a multimeric L10(L12)X complex.

The protein resides in the plastid. Its subcellular location is the chloroplast. In terms of biological role, forms part of the ribosomal stalk which helps the ribosome interact with GTP-bound translation factors. The protein is Large ribosomal subunit protein uL11c of Guillardia theta (Cryptophyte).